Here is a 139-residue protein sequence, read N- to C-terminus: uncharacterized protein (139 aa).

The region spanning 5-114 is the HIT domain; that stretch reads IFCKIINKEL…IPRFKNDGFG (110 aa). Residues 99 to 103 carry the Histidine triad motif motif; the sequence is HTHFH.

This is an uncharacterized protein from Borreliella burgdorferi (strain ATCC 35210 / DSM 4680 / CIP 102532 / B31) (Borrelia burgdorferi).